We begin with the raw amino-acid sequence, 149 residues long: Large ribosomal subunit protein uL13 (149 aa).

Belongs to the universal ribosomal protein uL13 family. In terms of assembly, part of the 50S ribosomal subunit.

This protein is one of the early assembly proteins of the 50S ribosomal subunit, although it is not seen to bind rRNA by itself. It is important during the early stages of 50S assembly. The protein is Large ribosomal subunit protein uL13 of Pelodictyon phaeoclathratiforme (strain DSM 5477 / BU-1).